Consider the following 345-residue polypeptide: uncharacterized protein (345 aa).

It belongs to the cycloisomerase 2 family.

This is an uncharacterized protein from Staphylococcus saprophyticus subsp. saprophyticus (strain ATCC 15305 / DSM 20229 / NCIMB 8711 / NCTC 7292 / S-41).